Reading from the N-terminus, the 295-residue chain is Nucleotide-binding protein BPUM_3115 (295 aa).

Position 16–23 (16–23 (GMSGAGKT)) interacts with ATP. 67–70 (DLRG) contacts GTP.

This sequence belongs to the RapZ-like family.

In terms of biological role, displays ATPase and GTPase activities. The polypeptide is Nucleotide-binding protein BPUM_3115 (Bacillus pumilus (strain SAFR-032)).